Here is a 286-residue protein sequence, read N- to C-terminus: S-adenosylmethionine-dependent methyltransferase UmaA (286 aa).

S-adenosyl-L-methionine contacts are provided by residues 32–33 (YT), 67–75 (LLDIGCGWG), 93–98 (TLSRNQ), and 122–123 (WD). C268 is an active-site residue.

The protein belongs to the CFA/CMAS family.

The protein resides in the cytoplasm. Functionally, methyltransferase that modifies short-chain fatty acids. In vitro, catalyzes the transfer of the methyl group from S-adenosyl-L-methionine (SAM) to the double bond of phospholipid-linked oleic acid to produce tuberculostearic acid (10-methylstearic-acid or TSA). This chain is S-adenosylmethionine-dependent methyltransferase UmaA, found in Mycobacterium tuberculosis (strain ATCC 25618 / H37Rv).